Here is a 726-residue protein sequence, read N- to C-terminus: Amino-acid acetyltransferase, mitochondrial (726 aa).

Over residues 1–18 the composition is skewed to polar residues; sequence MSSRTLVGLRSTTSTHLQ. The transit peptide at 1 to 44 directs the protein to the mitochondrion; sequence MSSRTLVGLRSTTSTHLQRSGVAAAAAVSSSSTSSSGSAPRRCL. Residues 1 to 64 are disordered; sequence MSSRTLVGLR…SAEFSSSSKS (64 aa). Positions 20–39 are enriched in low complexity; it reads SGVAAAAAVSSSSTSSSGSA. Over residues 45 to 58 the composition is skewed to polar residues; the sequence is SSASGRQVQQSAEF. One can recognise an N-acetyltransferase domain in the interval 547 to 716; the sequence is DRPRLGLDDP…YEAVCRSIQP (170 aa).

The protein belongs to the acetyltransferase family.

The protein localises to the mitochondrion. It carries out the reaction L-glutamate + acetyl-CoA = N-acetyl-L-glutamate + CoA + H(+). The protein operates within amino-acid biosynthesis; L-arginine biosynthesis; N(2)-acetyl-L-ornithine from L-glutamate: step 1/4. N-acetylglutamate synthase involved in arginine biosynthesis. This is Amino-acid acetyltransferase, mitochondrial (arg2) from Aspergillus niger (strain ATCC MYA-4892 / CBS 513.88 / FGSC A1513).